Consider the following 119-residue polypeptide: Odin profilin (119 aa).

Belongs to the Asgard profilin family.

The protein localises to the cytoplasm. The protein resides in the cytoskeleton. Inhibition of rabbit actin polymerization is reduced by phosphatidylinositol-(4,5)-P2(1,2-dipalmitoyl), a soluble form of the phospholipid phosphatidylinositol, suggesting an unknown lipid might regulate actin-profilin interaction in vivo. Its function is as follows. Binds to actin and affects the structure of the cytoskeleton. At high concentrations inhibits spontaneous rabbit actin nucleation. This strongly suggests this archaea has a profilin-regulated actin system, and actin-type genes can be identified in this organism. The protein is Odin profilin of Odinarchaeota yellowstonii (strain LCB_4).